A 217-amino-acid polypeptide reads, in one-letter code: ATP-dependent Clp protease proteolytic subunit 1 (217 aa).

Residues M1 to S24 are disordered. The active-site Nucleophile is the S108. H133 is an active-site residue.

It belongs to the peptidase S14 family. As to quaternary structure, fourteen ClpP subunits assemble into 2 heptameric rings which stack back to back to give a disk-like structure with a central cavity, resembling the structure of eukaryotic proteasomes.

The protein resides in the cytoplasm. The catalysed reaction is Hydrolysis of proteins to small peptides in the presence of ATP and magnesium. alpha-casein is the usual test substrate. In the absence of ATP, only oligopeptides shorter than five residues are hydrolyzed (such as succinyl-Leu-Tyr-|-NHMec, and Leu-Tyr-Leu-|-Tyr-Trp, in which cleavage of the -Tyr-|-Leu- and -Tyr-|-Trp bonds also occurs).. Functionally, cleaves peptides in various proteins in a process that requires ATP hydrolysis. Has a chymotrypsin-like activity. Plays a major role in the degradation of misfolded proteins. The chain is ATP-dependent Clp protease proteolytic subunit 1 from Streptomyces avermitilis (strain ATCC 31267 / DSM 46492 / JCM 5070 / NBRC 14893 / NCIMB 12804 / NRRL 8165 / MA-4680).